The primary structure comprises 204 residues: Peptide deformylase (204 aa).

2 residues coordinate Fe cation: C131 and H174. Residue E175 is part of the active site. H178 contacts Fe cation.

The protein belongs to the polypeptide deformylase family. Requires Fe(2+) as cofactor.

The catalysed reaction is N-terminal N-formyl-L-methionyl-[peptide] + H2O = N-terminal L-methionyl-[peptide] + formate. Its function is as follows. Removes the formyl group from the N-terminal Met of newly synthesized proteins. Requires at least a dipeptide for an efficient rate of reaction. N-terminal L-methionine is a prerequisite for activity but the enzyme has broad specificity at other positions. This is Peptide deformylase from Streptococcus equi subsp. zooepidemicus (strain MGCS10565).